The primary structure comprises 130 residues: Cholecystokinin (130 aa).

An N-terminal signal peptide occupies residues 1-20; the sequence is MYSGICICVFLAVLSASSFG. The propeptide occupies 21–48; that stretch reads QQTAGSHNGNPLAAELEQSLTEHHRHVR. The interval 40-59 is disordered; sequence LTEHHRHVRAPSSAGPLKPV. Tyr112 is modified (sulfotyrosine). The residue at position 118 (Phe118) is a Phenylalanine amide. Positions 122-130 are excised as a propeptide; the sequence is SAEEYEYSS. Sulfotyrosine occurs at positions 126 and 128.

It belongs to the gastrin/cholecystokinin family. In terms of processing, the precursor is cleaved by proteases to produce a number of active cholecystokinins. As to expression, highly concentrated in the duodenum. Also localized in more distal parts of the small intestine.

The protein resides in the secreted. In terms of biological role, this peptide hormone induces gall bladder contraction and the release of pancreatic enzymes in the gut. Its function in the brain is not clear. The polypeptide is Cholecystokinin (CCK) (Struthio camelus (Common ostrich)).